The sequence spans 211 residues: uncharacterized protein (211 aa).

7 residues coordinate Zn(2+): His-54, His-56, Asp-58, His-59, His-129, Asp-148, and His-189.

The protein belongs to the metallo-beta-lactamase superfamily. Glyoxalase II family. The cofactor is Zn(2+).

This is an uncharacterized protein from Aquifex aeolicus (strain VF5).